A 488-amino-acid polypeptide reads, in one-letter code: Bifunctional protein GlmU (488 aa).

Residues 1–237 are pyrophosphorylase; that stretch reads MPRTRTPLAA…AEEASGVNDR (237 aa). UDP-N-acetyl-alpha-D-glucosamine is bound by residues 13-16, Lys-27, Gln-82, 87-88, 110-112, Gly-149, Glu-164, Asn-179, and Asn-235; these read LAAG, GT, and SGD. Residue Asp-112 participates in Mg(2+) binding. Residue Asn-235 coordinates Mg(2+). The segment at 238 to 258 is linker; that stretch reads IELARANRVMVGRLAEAFMRA. The N-acetyltransferase stretch occupies residues 259 to 488; that stretch reads GVTIEDPARF…KGRPAARRAS (230 aa). UDP-N-acetyl-alpha-D-glucosamine-binding residues include Arg-341 and Lys-359. The Proton acceptor role is filled by His-371. Tyr-374 and Asn-385 together coordinate UDP-N-acetyl-alpha-D-glucosamine. Residues Ala-388, 394-395, Ser-413, Ala-431, and Arg-448 each bind acetyl-CoA; that span reads NY. The interval 459–488 is disordered; that stretch reads AQRQAEKQMKGTATGPAPARKGRPAARRAS. A compositionally biased stretch (basic residues) spans 478–488; it reads RKGRPAARRAS.

This sequence in the N-terminal section; belongs to the N-acetylglucosamine-1-phosphate uridyltransferase family. In the C-terminal section; belongs to the transferase hexapeptide repeat family. Homotrimer. Mg(2+) is required as a cofactor.

The protein resides in the cytoplasm. The enzyme catalyses alpha-D-glucosamine 1-phosphate + acetyl-CoA = N-acetyl-alpha-D-glucosamine 1-phosphate + CoA + H(+). It catalyses the reaction N-acetyl-alpha-D-glucosamine 1-phosphate + UTP + H(+) = UDP-N-acetyl-alpha-D-glucosamine + diphosphate. It functions in the pathway nucleotide-sugar biosynthesis; UDP-N-acetyl-alpha-D-glucosamine biosynthesis; N-acetyl-alpha-D-glucosamine 1-phosphate from alpha-D-glucosamine 6-phosphate (route II): step 2/2. Its pathway is nucleotide-sugar biosynthesis; UDP-N-acetyl-alpha-D-glucosamine biosynthesis; UDP-N-acetyl-alpha-D-glucosamine from N-acetyl-alpha-D-glucosamine 1-phosphate: step 1/1. The protein operates within bacterial outer membrane biogenesis; LPS lipid A biosynthesis. Its function is as follows. Catalyzes the last two sequential reactions in the de novo biosynthetic pathway for UDP-N-acetylglucosamine (UDP-GlcNAc). The C-terminal domain catalyzes the transfer of acetyl group from acetyl coenzyme A to glucosamine-1-phosphate (GlcN-1-P) to produce N-acetylglucosamine-1-phosphate (GlcNAc-1-P), which is converted into UDP-GlcNAc by the transfer of uridine 5-monophosphate (from uridine 5-triphosphate), a reaction catalyzed by the N-terminal domain. This chain is Bifunctional protein GlmU, found in Anaeromyxobacter dehalogenans (strain 2CP-C).